The primary structure comprises 41 residues: Large ribosomal subunit protein bL36B (41 aa).

It belongs to the bacterial ribosomal protein bL36 family.

This Haemophilus ducreyi (strain 35000HP / ATCC 700724) protein is Large ribosomal subunit protein bL36B.